The following is a 210-amino-acid chain: Cytochrome c biogenesis ATP-binding export protein CcmA (210 aa).

Residues 4–207 (LAVRDLAVAR…RQSRPAGFNE (204 aa)) enclose the ABC transporter domain. Residue 36–43 (GPNGIGKT) participates in ATP binding.

It belongs to the ABC transporter superfamily. CcmA exporter (TC 3.A.1.107) family. In terms of assembly, the complex is composed of two ATP-binding proteins (CcmA) and two transmembrane proteins (CcmB).

The protein resides in the cell inner membrane. It carries out the reaction heme b(in) + ATP + H2O = heme b(out) + ADP + phosphate + H(+). Its function is as follows. Part of the ABC transporter complex CcmAB involved in the biogenesis of c-type cytochromes; once thought to export heme, this seems not to be the case, but its exact role is uncertain. Responsible for energy coupling to the transport system. In Paracoccus denitrificans (strain Pd 1222), this protein is Cytochrome c biogenesis ATP-binding export protein CcmA.